Here is a 227-residue protein sequence, read N- to C-terminus: Ribonuclease 3 (227 aa).

The RNase III domain maps to 3-130 (TNAISKIIKY…LIGAIYLDGG (128 aa)). Glu-43 is a Mg(2+) binding site. Asp-47 is a catalytic residue. Mg(2+)-binding residues include Asn-116 and Glu-119. Glu-119 is a catalytic residue. A DRBM domain is found at 155–224 (DAKTILQEWA…ASLMLAKINY (70 aa)).

This sequence belongs to the ribonuclease III family. As to quaternary structure, homodimer. It depends on Mg(2+) as a cofactor.

Its subcellular location is the cytoplasm. It catalyses the reaction Endonucleolytic cleavage to 5'-phosphomonoester.. In terms of biological role, digests double-stranded RNA. Involved in the processing of primary rRNA transcript to yield the immediate precursors to the large and small rRNAs (23S and 16S). Processes some mRNAs, and tRNAs when they are encoded in the rRNA operon. Processes pre-crRNA and tracrRNA of type II CRISPR loci if present in the organism. This chain is Ribonuclease 3, found in Ehrlichia ruminantium (strain Welgevonden).